The chain runs to 316 residues: Mycothiol acetyltransferase (316 aa).

N-acetyltransferase domains follow at residues 16–153 and 156–316; these read REVR…VPAV and VRIR…PAAN. Position 36 (Glu36) interacts with 1D-myo-inositol 2-(L-cysteinylamino)-2-deoxy-alpha-D-glucopyranoside. Residues 83-85 and 91-96 each bind acetyl-CoA; these read LVV and RRGIGS. 3 residues coordinate 1D-myo-inositol 2-(L-cysteinylamino)-2-deoxy-alpha-D-glucopyranoside: Glu183, Lys228, and Glu238. Acetyl-CoA contacts are provided by residues 242 to 244 and 249 to 255; these read VGV and QGRGLGQ. A 1D-myo-inositol 2-(L-cysteinylamino)-2-deoxy-alpha-D-glucopyranoside-binding site is contributed by Tyr283. 288–293 is a binding site for acetyl-CoA; that stretch reads NVAAVR.

The protein belongs to the acetyltransferase family. MshD subfamily. Monomer.

It carries out the reaction 1D-myo-inositol 2-(L-cysteinylamino)-2-deoxy-alpha-D-glucopyranoside + acetyl-CoA = mycothiol + CoA + H(+). Functionally, catalyzes the transfer of acetyl from acetyl-CoA to desacetylmycothiol (Cys-GlcN-Ins) to form mycothiol. This is Mycothiol acetyltransferase from Mycobacterium avium (strain 104).